Reading from the N-terminus, the 362-residue chain is Lipoprotein p35 (362 aa).

An N-terminal signal peptide occupies residues 1–30 (MKIKKIKLLKALALTGAFGIVATVPVIVSS). Cys31 carries the N-palmitoyl cysteine lipid modification. The S-diacylglycerol cysteine moiety is linked to residue Cys31. Residues 33 to 53 (STSENNGNGNGNGGTDGNTQQ) are disordered.

This sequence belongs to the p35 lipoprotein family. In terms of processing, the N-terminus is blocked.

It is found in the cell membrane. Its function is as follows. Major M.penetrans antigen. The protein is Lipoprotein p35 of Malacoplasma penetrans (strain HF-2) (Mycoplasma penetrans).